The sequence spans 873 residues: Alanine--tRNA ligase (873 aa).

4 residues coordinate Zn(2+): His-563, His-567, Cys-664, and His-668.

It belongs to the class-II aminoacyl-tRNA synthetase family. It depends on Zn(2+) as a cofactor.

The protein localises to the cytoplasm. It catalyses the reaction tRNA(Ala) + L-alanine + ATP = L-alanyl-tRNA(Ala) + AMP + diphosphate. Functionally, catalyzes the attachment of alanine to tRNA(Ala) in a two-step reaction: alanine is first activated by ATP to form Ala-AMP and then transferred to the acceptor end of tRNA(Ala). Also edits incorrectly charged Ser-tRNA(Ala) and Gly-tRNA(Ala) via its editing domain. The protein is Alanine--tRNA ligase of Aromatoleum aromaticum (strain DSM 19018 / LMG 30748 / EbN1) (Azoarcus sp. (strain EbN1)).